Reading from the N-terminus, the 204-residue chain is Guanylate kinase (204 aa).

A Guanylate kinase-like domain is found at 5 to 184; the sequence is GLLIVLSGPS…ACDKIKAIVL (180 aa). An ATP-binding site is contributed by 12–19; the sequence is GPSGVGKG.

The protein belongs to the guanylate kinase family.

Its subcellular location is the cytoplasm. The catalysed reaction is GMP + ATP = GDP + ADP. Functionally, essential for recycling GMP and indirectly, cGMP. This Bacillus subtilis (strain 168) protein is Guanylate kinase (gmk).